Consider the following 276-residue polypeptide: NH(3)-dependent NAD(+) synthetase (276 aa).

ATP is bound at residue 43 to 50 (GISGGVDS). Asp49 contributes to the Mg(2+) binding site. A deamido-NAD(+)-binding site is contributed by Arg146. Thr166 is a binding site for ATP. Position 171 (Glu171) interacts with Mg(2+). Positions 179 and 186 each coordinate deamido-NAD(+). Positions 195 and 217 each coordinate ATP. 266 to 267 (HK) contributes to the deamido-NAD(+) binding site.

Belongs to the NAD synthetase family. In terms of assembly, homodimer.

The catalysed reaction is deamido-NAD(+) + NH4(+) + ATP = AMP + diphosphate + NAD(+) + H(+). It functions in the pathway cofactor biosynthesis; NAD(+) biosynthesis; NAD(+) from deamido-NAD(+) (ammonia route): step 1/1. In terms of biological role, catalyzes the ATP-dependent amidation of deamido-NAD to form NAD. Uses ammonia as a nitrogen source. This chain is NH(3)-dependent NAD(+) synthetase, found in Vibrio atlanticus (strain LGP32) (Vibrio splendidus (strain Mel32)).